We begin with the raw amino-acid sequence, 88 residues long: Small ribosomal subunit protein bS20 (88 aa).

It belongs to the bacterial ribosomal protein bS20 family.

Binds directly to 16S ribosomal RNA. The protein is Small ribosomal subunit protein bS20 of Rhodopseudomonas palustris (strain BisB18).